Consider the following 137-residue polypeptide: Proofreading thioesterase EntH (137 aa).

Residue glutamate 63 is the Nucleophile or proton acceptor of the active site.

This sequence belongs to the thioesterase PaaI family. Homotetramer. Dimer of dimers. Interacts specifically with the aryl carrier protein (ArCP) domain of EntB.

The protein resides in the cytoplasm. It functions in the pathway siderophore biosynthesis; enterobactin biosynthesis. Required for optimal enterobactin synthesis. Acts as a proofreading enzyme that prevents EntB misacylation by hydrolyzing the thioester bound existing between EntB and wrongly charged molecules. This Klebsiella pneumoniae subsp. pneumoniae (strain ATCC 700721 / MGH 78578) protein is Proofreading thioesterase EntH (entH).